The following is a 175-amino-acid chain: MTDCEFGYIYRLAQDYLQCVLQIPQPGSGPSKTSRVLQNVAFSVQKEVEKNLKSCLDNVNVVSVDTARTLFNQVMEKEFEDGIINWGRIVTIFAFEGILIKKLLRQQIAPDVDTYKEISYFVAEFIMNNTGEWIRQNGGWENGFVKKFEPKSGWMTFLEVTGKICEMLSLLKQYC.

The BH1 signature appears at 77–97 (KEFEDGIINWGRIVTIFAFEG). A BH2 motif is present at residues 132 to 147 (EWIRQNGGWENGFVKK).

The protein belongs to the Bcl-2 family. In terms of assembly, interacts directly with BAK1, BID, BMF and BBC3. Interacts directly with BCL2L11/BIM. Interacts with BAX isoform Sigma. Interacts directly with PMAIP1. Interacts with RTL10/BOP. Interacts with ING4. Interacts with UBQLN4. As to expression, seems to be restricted to the hematopoietic compartment. Expressed in peripheral blood, spleen, and bone marrow, at moderate levels in lung, small intestine and testis, at a minimal levels in other tissues. Also found in vascular smooth muscle cells and hematopoietic malignancies.

It is found in the cytoplasm. Functionally, retards apoptosis induced by IL-3 deprivation. May function in the response of hemopoietic cells to external signals and in maintaining endothelial survival during infection. Can inhibit apoptosis induced by serum starvation in the mammary epithelial cell line HC11. The protein is Bcl-2-related protein A1 (BCL2A1) of Homo sapiens (Human).